We begin with the raw amino-acid sequence, 565 residues long: Proline--tRNA ligase (565 aa).

This sequence belongs to the class-II aminoacyl-tRNA synthetase family. ProS type 1 subfamily. In terms of assembly, homodimer.

Its subcellular location is the cytoplasm. It carries out the reaction tRNA(Pro) + L-proline + ATP = L-prolyl-tRNA(Pro) + AMP + diphosphate. In terms of biological role, catalyzes the attachment of proline to tRNA(Pro) in a two-step reaction: proline is first activated by ATP to form Pro-AMP and then transferred to the acceptor end of tRNA(Pro). As ProRS can inadvertently accommodate and process non-cognate amino acids such as alanine and cysteine, to avoid such errors it has two additional distinct editing activities against alanine. One activity is designated as 'pretransfer' editing and involves the tRNA(Pro)-independent hydrolysis of activated Ala-AMP. The other activity is designated 'posttransfer' editing and involves deacylation of mischarged Ala-tRNA(Pro). The misacylated Cys-tRNA(Pro) is not edited by ProRS. In Lactobacillus acidophilus (strain ATCC 700396 / NCK56 / N2 / NCFM), this protein is Proline--tRNA ligase.